The sequence spans 599 residues: Subtilisin-like protease 1 (599 aa).

The N-terminal stretch at 1–20 is a signal peptide; the sequence is MRTVFIYACIISLVLRTIPA. Residues 21 to 195 constitute a propeptide, inhibition peptide; sequence HNDLMSKEKE…VESDELVGAD (175 aa). Asn-57 is a glycosylation site (N-linked (GlcNAc...) asparagine). Residues 74–101 are a coiled coil; sequence EDAPKEELNKIEMEKKKAEEEAKNSKKK. Ca(2+) is bound by residues Asn-123, Thr-126, Pro-128, and Gly-183. Asn-227 is a glycosylation site (N-linked (GlcNAc...) asparagine). Position 251 (Asp-251) interacts with Ca(2+). A Peptidase S8 domain is found at 257 to 574; it reads QWGLDLARLD…GGYIDILNAV (318 aa). Cystine bridges form between Cys-283–Cys-393 and Cys-372–Cys-389. The active-site Charge relay system is the Asp-286. Residues Asp-295, Glu-306, Asp-314, Asp-315, Asp-316, Asn-318, Ile-320, Asp-322, and Asp-323 each contribute to the Ca(2+) site. A glycan (N-linked (GlcNAc...) asparagine) is linked at Asn-331. His-342 functions as the Charge relay system in the catalytic mechanism. Position 353 (Ile-353) interacts with Ca(2+). An N-linked (GlcNAc...) asparagine glycan is attached at Asn-355. Residues Asn-356, Ile-358, and Val-360 each contribute to the Ca(2+) site. N-linked (GlcNAc...) asparagine glycosylation is found at Asn-402 and Asn-434. The cysteines at positions 435 and 448 are disulfide-linked. Ser-519 (charge relay system) is an active-site residue.

It belongs to the peptidase S8 family. Post-translationally, the N-terminal prodomain is cleaved.

It localises to the secreted. The protein localises to the parasitophorous vacuole lumen. Its subcellular location is the cytoplasmic vesicle. It is found in the secretory vesicle. It carries out the reaction Hydrolysis of proteins with broad specificity for peptide bonds, and a preference for a large uncharged residue in P1. Hydrolyzes peptide amides.. Functionally, mediates the proteolytic maturation of serine protease SERA3. Mediates the proteolytic maturation of MSP1, and thereby may prime the parasite cell surface for invasion of fresh erythrocytes. Required for completion of the parasite pre-erythrocytic stages. Required for hepatic schizont development and merozoite formation. Required for the egress of the hepatic merozoites from the parasitophorous vacuole. Required for parasite infectivity during blood stages. Required for male gamete egress. This is Subtilisin-like protease 1 from Plasmodium berghei (strain Anka).